We begin with the raw amino-acid sequence, 152 residues long: Deoxyuridine 5'-triphosphate nucleotidohydrolase (152 aa).

Residues 71–73, Asn84, 88–90, and Met98 each bind substrate; these read RSG and LID.

The protein belongs to the dUTPase family. Mg(2+) is required as a cofactor.

The enzyme catalyses dUTP + H2O = dUMP + diphosphate + H(+). It functions in the pathway pyrimidine metabolism; dUMP biosynthesis; dUMP from dCTP (dUTP route): step 2/2. This enzyme is involved in nucleotide metabolism: it produces dUMP, the immediate precursor of thymidine nucleotides and it decreases the intracellular concentration of dUTP so that uracil cannot be incorporated into DNA. The protein is Deoxyuridine 5'-triphosphate nucleotidohydrolase of Shewanella halifaxensis (strain HAW-EB4).